A 134-amino-acid chain; its full sequence is Profilin-2 (134 aa).

Cys13 and Cys118 form a disulfide bridge. The Involved in PIP2 interaction motif lies at 84-100 (AVIRGKKGSGGITIKKT). A Phosphothreonine modification is found at Thr114.

The protein belongs to the profilin family. In terms of assembly, occurs in many kinds of cells as a complex with monomeric actin in a 1:1 ratio. Phosphorylated by MAP kinases.

Its subcellular location is the cytoplasm. The protein localises to the cytoskeleton. Its function is as follows. Binds to actin and affects the structure of the cytoskeleton. At high concentrations, profilin prevents the polymerization of actin, whereas it enhances it at low concentrations. This chain is Profilin-2, found in Olea europaea (Common olive).